A 760-amino-acid polypeptide reads, in one-letter code: Serine/threonine-protein kinase PknG (760 aa).

Residues 1–31 are disordered; it reads MTSPENPDLPDADDAYVDSGPGTQPASLEDL. The 243-residue stretch at 161-403 folds into the Protein kinase domain; sequence YEIKGCIAHG…SAEEMSSQLL (243 aa). ATP contacts are provided by residues 167-175 and Lys-191; that span reads IAHGGLGWV. Asp-286 serves as the catalytic Proton acceptor.

The protein belongs to the protein kinase superfamily. Ser/Thr protein kinase family. In terms of assembly, interacts with GarA in vitro.

The enzyme catalyses L-seryl-[protein] + ATP = O-phospho-L-seryl-[protein] + ADP + H(+). The catalysed reaction is L-threonyl-[protein] + ATP = O-phospho-L-threonyl-[protein] + ADP + H(+). In Mycolicibacterium smegmatis (strain ATCC 700084 / mc(2)155) (Mycobacterium smegmatis), this protein is Serine/threonine-protein kinase PknG (pknG).